The following is a 640-amino-acid chain: Threonine--tRNA ligase (640 aa).

The TGS domain maps to 1–61; the sequence is MPIIALPDGN…EKDSEVNIIT (61 aa). A catalytic region spans residues 242 to 533; it reads DHRRIAKQMS…LIEHYAGRLP (292 aa). Cys-333, His-384, and His-510 together coordinate Zn(2+).

This sequence belongs to the class-II aminoacyl-tRNA synthetase family. As to quaternary structure, homodimer. It depends on Zn(2+) as a cofactor.

The protein localises to the cytoplasm. It carries out the reaction tRNA(Thr) + L-threonine + ATP = L-threonyl-tRNA(Thr) + AMP + diphosphate + H(+). Catalyzes the attachment of threonine to tRNA(Thr) in a two-step reaction: L-threonine is first activated by ATP to form Thr-AMP and then transferred to the acceptor end of tRNA(Thr). Also edits incorrectly charged L-seryl-tRNA(Thr). This Prochlorococcus marinus (strain MIT 9313) protein is Threonine--tRNA ligase.